Consider the following 597-residue polypeptide: Phosphomethylpyrimidine synthase (597 aa).

Residues asparagine 207, methionine 236, tyrosine 265, histidine 301, 321-323 (SRG), 362-365 (DGLR), and glutamate 401 each bind substrate. Residue histidine 405 coordinates Zn(2+). Position 428 (tyrosine 428) interacts with substrate. Residue histidine 469 participates in Zn(2+) binding. 3 residues coordinate [4Fe-4S] cluster: cysteine 549, cysteine 552, and cysteine 557.

This sequence belongs to the ThiC family. As to quaternary structure, homodimer. The cofactor is [4Fe-4S] cluster.

It carries out the reaction 5-amino-1-(5-phospho-beta-D-ribosyl)imidazole + S-adenosyl-L-methionine = 4-amino-2-methyl-5-(phosphooxymethyl)pyrimidine + CO + 5'-deoxyadenosine + formate + L-methionine + 3 H(+). Its pathway is cofactor biosynthesis; thiamine diphosphate biosynthesis. Its function is as follows. Catalyzes the synthesis of the hydroxymethylpyrimidine phosphate (HMP-P) moiety of thiamine from aminoimidazole ribotide (AIR) in a radical S-adenosyl-L-methionine (SAM)-dependent reaction. The sequence is that of Phosphomethylpyrimidine synthase from Gluconobacter oxydans (strain 621H) (Gluconobacter suboxydans).